A 430-amino-acid chain; its full sequence is Putative membrane fusion protein SilB (430 aa).

An N-terminal signal peptide occupies residues 1–28 (MASLKIKYAAIIISSLIAGGLISVTAWQ). Residues 407–430 (RHPEKTENSMPAMSEQPVNMHSGH) are disordered. Over residues 414–430 (NSMPAMSEQPVNMHSGH) the composition is skewed to polar residues.

The protein belongs to the membrane fusion protein (MFP) (TC 8.A.1) family.

In terms of biological role, component of the sil cation efflux system that confers resistance to silver. May be part of a three-component cation/proton antiporter. This chain is Putative membrane fusion protein SilB (silB), found in Salmonella typhimurium.